The following is a 178-amino-acid chain: Deoxyuridine 5'-triphosphate nucleotidohydrolase (178 aa).

It belongs to the dUTPase family. It depends on Mg(2+) as a cofactor.

The catalysed reaction is dUTP + H2O = dUMP + diphosphate + H(+). Its pathway is pyrimidine metabolism; dUMP biosynthesis; dUMP from dCTP (dUTP route): step 2/2. This enzyme is involved in nucleotide metabolism: it produces dUMP, the immediate precursor of thymidine nucleotides and it decreases the intracellular concentration of dUTP so that uracil cannot be incorporated into DNA. The chain is Deoxyuridine 5'-triphosphate nucleotidohydrolase from Fowl adenovirus A serotype 1 (strain CELO / Phelps) (FAdV-1).